The following is a 758-amino-acid chain: Amyloid beta precursor protein binding family B member 2 (758 aa).

Phosphoserine is present on Ser123. Positions 134-154 are disordered; it reads KLEGKEPHPQDSSSCEILPSQ. Position 160 is a phosphoserine (Ser160). Basic and acidic residues predominate over residues 176–190; the sequence is EQNRGNHHGTAEEKS. Disordered stretches follow at residues 176–195, 206–295, and 326–351; these read EQNR…PVQG, LLLQ…LPPG, and DLQG…KQPW. 2 stretches are compositionally biased toward polar residues: residues 212 to 230 and 261 to 275; these read NRPQ…SSSP and SWTT…PSSP. In terms of domain architecture, WW spans 290–322; the sequence is PDLPPGWKRVSDIAGTYYWHIPTGTTQWERPVS. The span at 331–340 shows a compositional bias: polar residues; that stretch reads RKGSLSSVTP. Residues Ser334, Ser409, and Ser412 each carry the phosphoserine modification. PID domains lie at 413 to 578 and 584 to 736; these read DPEA…LQVD and TELV…VTTN.

In terms of assembly, interacts (via C-terminus) with APP (via C-terminus). Interacts with APLP2 (via cytoplasmic domain). Widely expressed.

The protein resides in the endoplasmic reticulum. The protein localises to the golgi apparatus. It localises to the early endosome. In terms of biological role, plays a role in the maintenance of lens transparency, and may also play a role in muscle cell strength. Involved in hippocampal neurite branching and neuromuscular junction formation, as a result plays a role in spatial memory functioning. Activates transcription of APP. The sequence is that of Amyloid beta precursor protein binding family B member 2 from Homo sapiens (Human).